A 660-amino-acid polypeptide reads, in one-letter code: UvrABC system protein B (660 aa).

The 154-residue stretch at 24–177 (KGFKEGNQFE…DDLARALIDL (154 aa)) folds into the Helicase ATP-binding domain. 37 to 44 (GVTGSGKT) contributes to the ATP binding site. Positions 90–113 (YYDYYQPEAYVPQSDTYIAKDSSV) match the Beta-hairpin motif. Residues 428–594 (QIDDLVSEVN…TIQKSVRDLI (167 aa)) enclose the Helicase C-terminal domain. Residues 620–655 (EKHIADIEKKMKKAAAELNFEAAAEYRDKLIMLKNT) form the UVR domain.

The protein belongs to the UvrB family. As to quaternary structure, forms a heterotetramer with UvrA during the search for lesions. Interacts with UvrC in an incision complex.

It localises to the cytoplasm. Its function is as follows. The UvrABC repair system catalyzes the recognition and processing of DNA lesions. A damage recognition complex composed of 2 UvrA and 2 UvrB subunits scans DNA for abnormalities. Upon binding of the UvrA(2)B(2) complex to a putative damaged site, the DNA wraps around one UvrB monomer. DNA wrap is dependent on ATP binding by UvrB and probably causes local melting of the DNA helix, facilitating insertion of UvrB beta-hairpin between the DNA strands. Then UvrB probes one DNA strand for the presence of a lesion. If a lesion is found the UvrA subunits dissociate and the UvrB-DNA preincision complex is formed. This complex is subsequently bound by UvrC and the second UvrB is released. If no lesion is found, the DNA wraps around the other UvrB subunit that will check the other stand for damage. In Agathobacter rectalis (strain ATCC 33656 / DSM 3377 / JCM 17463 / KCTC 5835 / VPI 0990) (Eubacterium rectale), this protein is UvrABC system protein B.